A 132-amino-acid chain; its full sequence is Protein NrdI (132 aa).

This sequence belongs to the NrdI family.

In terms of biological role, probably involved in ribonucleotide reductase function. The polypeptide is Protein NrdI (Staphylococcus epidermidis (strain ATCC 35984 / DSM 28319 / BCRC 17069 / CCUG 31568 / BM 3577 / RP62A)).